A 379-amino-acid polypeptide reads, in one-letter code: Cytochrome b (379 aa).

4 consecutive transmembrane segments (helical) span residues 33–53, 77–98, 113–133, and 178–198; these read FGSLLGACLTIQIITGLFLAM, WTIRYLHANGASVFFLCLFIHV, WNVGIILLFSVMATAFMGYVL, and FFALHFVLPFVILALVMIHLL. Histidine 83 and histidine 97 together coordinate heme b. Positions 182 and 196 each coordinate heme b. Histidine 201 lines the a ubiquinone pocket. The next 4 helical transmembrane spans lie at 226 to 246, 288 to 308, 320 to 340, and 347 to 367; these read TKDFLGLLLLILLLMVLTLFY, LGGVMALILSILILAIIPLLQ, LSQFLFWILVADLLTLTWIGG, and FITIGQVASILYFLLMVLIMP.

Belongs to the cytochrome b family. The cytochrome bc1 complex contains 11 subunits: 3 respiratory subunits (MT-CYB, CYC1 and UQCRFS1), 2 core proteins (UQCRC1 and UQCRC2) and 6 low-molecular weight proteins (UQCRH/QCR6, UQCRB/QCR7, UQCRQ/QCR8, UQCR10/QCR9, UQCR11/QCR10 and a cleavage product of UQCRFS1). This cytochrome bc1 complex then forms a dimer. Heme b serves as cofactor.

It localises to the mitochondrion inner membrane. Its function is as follows. Component of the ubiquinol-cytochrome c reductase complex (complex III or cytochrome b-c1 complex) that is part of the mitochondrial respiratory chain. The b-c1 complex mediates electron transfer from ubiquinol to cytochrome c. Contributes to the generation of a proton gradient across the mitochondrial membrane that is then used for ATP synthesis. In Lepilemur edwardsi (Milne-Edwards's sportive lemur), this protein is Cytochrome b (MT-CYB).